We begin with the raw amino-acid sequence, 60 residues long: Large ribosomal subunit protein bL32 (60 aa).

A disordered region spans residues 1-60 (MAVQQNKKSRSARDMRRSHDALESNALSVEKSTGEVHLRHHVSPDGFYRGRKVVDKGSDE). A compositionally biased stretch (basic and acidic residues) spans 11 to 22 (SARDMRRSHDAL).

This sequence belongs to the bacterial ribosomal protein bL32 family.

The sequence is that of Large ribosomal subunit protein bL32 from Pseudomonas aeruginosa (strain LESB58).